A 139-amino-acid chain; its full sequence is Ribonuclease P protein component (139 aa).

The protein belongs to the RnpA family. Consists of a catalytic RNA component (M1 or rnpB) and a protein subunit.

It carries out the reaction Endonucleolytic cleavage of RNA, removing 5'-extranucleotides from tRNA precursor.. RNaseP catalyzes the removal of the 5'-leader sequence from pre-tRNA to produce the mature 5'-terminus. It can also cleave other RNA substrates such as 4.5S RNA. The protein component plays an auxiliary but essential role in vivo by binding to the 5'-leader sequence and broadening the substrate specificity of the ribozyme. This is Ribonuclease P protein component from Chlamydia felis (strain Fe/C-56) (Chlamydophila felis).